A 218-amino-acid chain; its full sequence is Adenylate kinase (218 aa).

10-15 (GAGKGT) contacts ATP. Positions 30–59 (STGDMLRAAVKEETPLGRKAKEVMDSGNLV) are NMP. Residues Thr31, Arg36, 57–59 (NLV), 85–88 (GFPR), and Gln92 each bind AMP. The segment at 122–159 (GRRVHPASGRTYHLTFNPPQQQGVDDETGEPLIQRVDD) is LID. Residues Arg123 and 132–133 (TY) contribute to the ATP site. Residues Arg156 and Arg167 each coordinate AMP. Gly203 contacts ATP.

The protein belongs to the adenylate kinase family. In terms of assembly, monomer.

Its subcellular location is the cytoplasm. It catalyses the reaction AMP + ATP = 2 ADP. Its pathway is purine metabolism; AMP biosynthesis via salvage pathway; AMP from ADP: step 1/1. In terms of biological role, catalyzes the reversible transfer of the terminal phosphate group between ATP and AMP. Plays an important role in cellular energy homeostasis and in adenine nucleotide metabolism. The protein is Adenylate kinase of Chlorobium phaeovibrioides (strain DSM 265 / 1930) (Prosthecochloris vibrioformis (strain DSM 265)).